The sequence spans 1185 residues: Zinc finger SWIM domain-containing protein 5 (1185 aa).

The segment covering 1 to 10 (MADGGEREEL) has biased composition (basic and acidic residues). Disordered regions lie at residues 1-45 (MADG…GGAG) and 123-153 (AGAA…GSAP). An SWIM-type zinc finger spans residues 219–256 (YKVAISFDRCKITSVTCGCGNKDIFYCAHVVALSLYRI).

The protein is Zinc finger SWIM domain-containing protein 5 (ZSWIM5) of Homo sapiens (Human).